The chain runs to 561 residues: DNA ligase (561 aa).

Position 253 (E253) interacts with ATP. The active-site N6-AMP-lysine intermediate is the K255. Positions 260, 275, 304, 344, 421, and 427 each coordinate ATP.

Belongs to the ATP-dependent DNA ligase family. Mg(2+) is required as a cofactor.

It carries out the reaction ATP + (deoxyribonucleotide)n-3'-hydroxyl + 5'-phospho-(deoxyribonucleotide)m = (deoxyribonucleotide)n+m + AMP + diphosphate.. In terms of biological role, DNA ligase that seals nicks in double-stranded DNA during DNA replication, DNA recombination and DNA repair. The sequence is that of DNA ligase from Halobacterium salinarum (strain ATCC 29341 / DSM 671 / R1).